The following is a 270-amino-acid chain: Diaminopimelate epimerase (270 aa).

Residues asparagine 15, glutamine 49, and asparagine 66 each contribute to the substrate site. The Proton donor role is filled by cysteine 75. Substrate is bound by residues 76 to 77 (GN), asparagine 155, asparagine 187, and 204 to 205 (ER). Cysteine 213 serves as the catalytic Proton acceptor. Substrate is bound at residue 214 to 215 (GS).

This sequence belongs to the diaminopimelate epimerase family. Homodimer.

It is found in the cytoplasm. It carries out the reaction (2S,6S)-2,6-diaminopimelate = meso-2,6-diaminopimelate. It functions in the pathway amino-acid biosynthesis; L-lysine biosynthesis via DAP pathway; DL-2,6-diaminopimelate from LL-2,6-diaminopimelate: step 1/1. In terms of biological role, catalyzes the stereoinversion of LL-2,6-diaminopimelate (L,L-DAP) to meso-diaminopimelate (meso-DAP), a precursor of L-lysine and an essential component of the bacterial peptidoglycan. This chain is Diaminopimelate epimerase, found in Rickettsia akari (strain Hartford).